Reading from the N-terminus, the 278-residue chain is Short-chain dehydrogenase/reductase eupG (278 aa).

Residues Leu19, Asp71, and Asn98 each contribute to the NADP(+) site. Ser155 (proton donor) is an active-site residue. Tyr188, Lys192, and Thr223 together coordinate NADP(+). The active-site Proton acceptor is Tyr188. Lys192 functions as the Lowers pKa of active site Tyr in the catalytic mechanism.

It belongs to the short-chain dehydrogenases/reductases (SDR) family.

Its pathway is secondary metabolite biosynthesis; terpenoid biosynthesis. In terms of biological role, short-chain dehydrogenase/reductase; part of the gene cluster that mediates the biosynthesis of eupenifeldin, a bistropolone meroterpenoid that acts as an antitumor agent. The first step of eupenifeldin biosynthesis is the biosynthesis of 3-methylorcinaldehyde performed by the non-reducing polyketide synthase eupA. Oxidative dearomatization of 3-methylorcinaldehyde likely catalyzed by the FAD-dependent monooxygenase eupB is followed by oxidative ring expansion by the 2-oxoglutarate-dependent dioxygenase eupC to provide the first tropolone metabolite, tropolone stipitaldehyde. In parallel, generation of sesquiterpene alpha-humulene from farnesylpyrophosphate (FPP) is catalyzed by the terpene cyclase eupE. The cytochrome P450 monooxygenase eupD then hydroxylates humulene to humulenol. The putative Diels-Alderase eupF probably catalyzes the formation of the tropolone-humulene skeleton by linking humulenol and the polyketide moiety. The short-chain dehydrogenase/reductase eupG and the flavin-dependent monooxygenase eupH are also essential for eupenifeldin biosynthesis and are likely the additional decorating enzymes of the tropolone-humulene skeleton to produce final eupenifeldin or derivatives. The sequence is that of Short-chain dehydrogenase/reductase eupG from Phoma sp.